The chain runs to 183 residues: UPF0200 protein MmarC6_1392 (183 aa).

8 to 15 (GMPGSGKS) serves as a coordination point for ATP.

Belongs to the UPF0200 family.

The protein is UPF0200 protein MmarC6_1392 of Methanococcus maripaludis (strain C6 / ATCC BAA-1332).